A 102-amino-acid chain; its full sequence is MGKVGNIEHIEERAETELMPPSMYKVILNNDDYTPMDFVIEVLQLFFNKNEQEATDIMLAIHHQGKGICGVFPFGIAETKVAQVNQFARQNQHPLLCSLEKA.

Belongs to the ClpS family. In terms of assembly, binds to the N-terminal domain of the chaperone ClpA.

Involved in the modulation of the specificity of the ClpAP-mediated ATP-dependent protein degradation. The chain is ATP-dependent Clp protease adapter protein ClpS from Shewanella loihica (strain ATCC BAA-1088 / PV-4).